The chain runs to 452 residues: MKVISNFQNKKILILGLAKSGEAAAKLLTKLGALVTVNDSKPFDQNPAAQALLEEGIKVICGSHPVELLDEDFEYMVKNPGIPYDNPMVKRALAKEIPILTEVELAYFVSEAPIIGITGSNGKTTTTTMIADVLNAGGQSALLSGNIGYPASKVVQKAIAGDTLVMELSSFQLVGVNAFRPHIAVITNLMPTHLDYHGSFEDYVAAKWMIQAQMTESDYLILNANQEISATLAKTTKATVIPFSTQKVVDGAYLKDGILYFKEQAIIAATDLGVPGSHNIENALATIAVAKLSGIADDIIAQCLSHFGGVKHRLQRVGQIKDITFYNDSKSTNILATQKALSGFDNSRLILIAGGLDRGNEFDDLVPDLLGLKQMIILGESAERMKRAANKAEVSYLEARNVAEATELAFKLAQTGDTILLSPANASWDMYPNFEVRGDEFLATFDCLRGDA.

ATP is bound at residue 119-125 (GSNGKTT).

It belongs to the MurCDEF family.

Its subcellular location is the cytoplasm. The catalysed reaction is UDP-N-acetyl-alpha-D-muramoyl-L-alanine + D-glutamate + ATP = UDP-N-acetyl-alpha-D-muramoyl-L-alanyl-D-glutamate + ADP + phosphate + H(+). The protein operates within cell wall biogenesis; peptidoglycan biosynthesis. Functionally, cell wall formation. Catalyzes the addition of glutamate to the nucleotide precursor UDP-N-acetylmuramoyl-L-alanine (UMA). In Streptococcus pyogenes serotype M28 (strain MGAS6180), this protein is UDP-N-acetylmuramoylalanine--D-glutamate ligase.